A 117-amino-acid polypeptide reads, in one-letter code: NADH-ubiquinone oxidoreductase chain 3 (117 aa).

The next 3 helical transmembrane spans lie at 4–24, 61–81, and 86–106; these read FLGI…LLGL, LVAI…PWAL, and IGYF…VGFI.

Belongs to the complex I subunit 3 family.

Its subcellular location is the mitochondrion membrane. The catalysed reaction is a ubiquinone + NADH + 5 H(+)(in) = a ubiquinol + NAD(+) + 4 H(+)(out). In terms of biological role, core subunit of the mitochondrial membrane respiratory chain NADH dehydrogenase (Complex I) that is believed to belong to the minimal assembly required for catalysis. Complex I functions in the transfer of electrons from NADH to the respiratory chain. The immediate electron acceptor for the enzyme is believed to be ubiquinone. The sequence is that of NADH-ubiquinone oxidoreductase chain 3 (NAD3) from Prototheca wickerhamii.